The sequence spans 83 residues: Probable insulin-like peptide alpha-type 2 (83 aa).

The N-terminal stretch at 1-21 is a signal peptide; the sequence is MHTTTILICFFIFLVQVSTMD. Disulfide bonds link Cys32–Cys66, Cys44–Cys79, and Cys54–Cys80.

Belongs to the insulin family.

It localises to the secreted. This Caenorhabditis elegans protein is Probable insulin-like peptide alpha-type 2 (ins-22).